The chain runs to 116 residues: Selenoprotein H (116 aa).

An N6-acetyllysine modification is found at lysine 20. Residues 35 to 38 (CTSU) constitute a cross-link (cysteinyl-selenocysteine (Cys-Sec); redox-active). Residue selenocysteine 38 is a non-standard amino acid, selenocysteine.

It belongs to the SelWTH family.

Functionally, may be involved in a redox-related process. The chain is Selenoprotein H from Mus musculus (Mouse).